Reading from the N-terminus, the 193-residue chain is Potassium-transporting ATPase KdpC subunit (193 aa).

The chain crosses the membrane as a helical span at residues isoleucine 14 to alanine 34.

This sequence belongs to the KdpC family. The system is composed of three essential subunits: KdpA, KdpB and KdpC.

It is found in the cell membrane. Part of the high-affinity ATP-driven potassium transport (or Kdp) system, which catalyzes the hydrolysis of ATP coupled with the electrogenic transport of potassium into the cytoplasm. This subunit acts as a catalytic chaperone that increases the ATP-binding affinity of the ATP-hydrolyzing subunit KdpB by the formation of a transient KdpB/KdpC/ATP ternary complex. The chain is Potassium-transporting ATPase KdpC subunit from Bacillus anthracis (strain A0248).